A 257-amino-acid chain; its full sequence is Snake venom serine protease KN9 (257 aa).

The signal sequence occupies residues 1-18 (MVLIRVLANLLILQLSYA). Residues 19–24 (QKSSEL) constitute a propeptide that is removed on maturation. Positions 25–248 (VVGGDECNIN…HLDWIKSIIA (224 aa)) constitute a Peptidase S1 domain. Cystine bridges form between C31/C162, C49/C65, C141/C209, C173/C188, and C199/C224. The active-site Charge relay system is the H64. N102 carries an N-linked (GlcNAc...) asparagine glycan. Residue D109 is the Charge relay system of the active site. N-linked (GlcNAc...) asparagine glycosylation is found at N120 and N121. Residue S203 is the Charge relay system of the active site.

This sequence belongs to the peptidase S1 family. Snake venom subfamily. Monomer. As to expression, expressed by the venom gland.

It is found in the secreted. Functionally, snake venom serine protease that may act in the hemostasis system of the prey. In Trimeresurus stejnegeri (Chinese green tree viper), this protein is Snake venom serine protease KN9.